We begin with the raw amino-acid sequence, 58 residues long: Cecropin-A (58 aa).

Positions 1–23 (MNFSKIFIFVVLAVLLLCSQTEA) are cleaved as a signal peptide. Leu-57 is subject to Leucine amide.

The protein belongs to the cecropin family. In terms of tissue distribution, relatively abundant in head, thorax and to a lesser extent in abdominal carcass and anterior midgut.

The protein resides in the secreted. Functionally, antibacterial activity against several Gram-positive and Gram-negative bacteria. Antifungal activity against A.fumigatus, B.cinerea, F.culmorum, F.oxysporum, N.crassa, C.albicans, C.neoformans and S.cerevisiae. The polypeptide is Cecropin-A (CecA) (Anopheles gambiae (African malaria mosquito)).